Consider the following 956-residue polypeptide: Bifunctional glutamine synthetase adenylyltransferase/adenylyl-removing enzyme (956 aa).

The interval 1–441 (MLPLSTPLLA…IFTQLIGDDS (441 aa)) is adenylyl removase. The adenylyl transferase stretch occupies residues 450-956 (HVPFKSLWLE…RRSWQQWLGE (507 aa)).

The protein belongs to the GlnE family. Requires Mg(2+) as cofactor.

It carries out the reaction [glutamine synthetase]-O(4)-(5'-adenylyl)-L-tyrosine + phosphate = [glutamine synthetase]-L-tyrosine + ADP. It catalyses the reaction [glutamine synthetase]-L-tyrosine + ATP = [glutamine synthetase]-O(4)-(5'-adenylyl)-L-tyrosine + diphosphate. Its function is as follows. Involved in the regulation of glutamine synthetase GlnA, a key enzyme in the process to assimilate ammonia. When cellular nitrogen levels are high, the C-terminal adenylyl transferase (AT) inactivates GlnA by covalent transfer of an adenylyl group from ATP to specific tyrosine residue of GlnA, thus reducing its activity. Conversely, when nitrogen levels are low, the N-terminal adenylyl removase (AR) activates GlnA by removing the adenylyl group by phosphorolysis, increasing its activity. The regulatory region of GlnE binds the signal transduction protein PII (GlnB) which indicates the nitrogen status of the cell. The polypeptide is Bifunctional glutamine synthetase adenylyltransferase/adenylyl-removing enzyme (Photorhabdus laumondii subsp. laumondii (strain DSM 15139 / CIP 105565 / TT01) (Photorhabdus luminescens subsp. laumondii)).